The following is a 392-amino-acid chain: uncharacterized protein (392 aa).

10 consecutive transmembrane segments (helical) span residues 2-23 (WLANFFVSASTTMIVPFLSLYI), 38-60 (SGYVFGITFLMAFLVSPFWGRFG), 73-95 (GTGIALSIFFMGFVTSVYQLFFL), 153-175 (FTYTFFITSFVIFSSVLLVLFGV), 195-217 (VLSYIFHHPALWVMMLLTMLIQT), 237-259 (VNLAFFSGMAFSATGLGSLLLAR), 272-291 (RILIGLLLAASFFFIPQALA), 297-319 (LLVFRFLFGMAMGGLLPCITAAI), 331-353 (VLGYNVSFRFLGNVLGPLLGGII), and 357-379 (FTISATFYVTAFLFFAGACMLWI).

It belongs to the major facilitator superfamily.

It localises to the cell membrane. This is an uncharacterized protein from Bacillus subtilis (strain 168).